The sequence spans 706 residues: Cyclic nucleotide-gated ion channel 18 (706 aa).

Over 1-53 the chain is Cytoplasmic; sequence MNKIRSLRCLLPETITSASTAASNRGSDGSQFSVLWRHQILDPDSNIVTYWNH. The chain crosses the membrane as a helical span at residues 54 to 74; the sequence is VFLITSILALFLDPFYFYVPY. Residues 75-86 lie on the Extracellular side of the membrane; it reads VGGPACLSIDIS. Residues 87 to 107 traverse the membrane as a helical segment; the sequence is LAATVTFFRTVADIFHLLHIF. At 108–142 the chain is on the cytoplasmic side; it reads MKFRTAFVARSSRVFGRGELVMDSREIAMRYLKTD. The chain crosses the membrane as a helical span at residues 143-163; that stretch reads FLIDVAAMLPLPQLVIWLVIP. Residues 164-174 lie on the Extracellular side of the membrane; that stretch reads AATNGTANHAN. Residues 175 to 195 traverse the membrane as a helical segment; that stretch reads STLALIVLVQYIPRSFIIFPL. The Cytoplasmic segment spans residues 196 to 217; that stretch reads NQRIIKTTGFIAKTAWAGAAYN. A helical membrane pass occupies residues 218 to 238; it reads LLLYILASHVLGAMWYLSSIG. The Extracellular portion of the chain corresponds to 239 to 345; the sequence is RQFSCWSNVC…ITTSVYLGET (107 aa). A helical membrane pass occupies residues 346–366; sequence LFCITICIFGLILFTLLIGNM. The Cytoplasmic segment spans residues 367-706; that stretch reads QSSLQSMSVR…PDFSIDKEDV (340 aa). Residues 449-579 and Glu-520 each bind a nucleoside 3',5'-cyclic phosphate; that span reads FFSQ…AFRY. Positions 565–580 are calmodulin-binding; the sequence is FKRLQSKKLQHAFRYY. An IQ domain is found at 585–614; it reads RAWGACFVQSAWRRYKRRKLAKELSLHESS. Residues 661 to 706 are disordered; that stretch reads ANTRRGTNQKASSSSTGKKDGSSTSLKMPQLFKPDEPDFSIDKEDV. Over residues 693 to 706 the composition is skewed to basic and acidic residues; the sequence is KPDEPDFSIDKEDV.

The protein belongs to the cyclic nucleotide-gated cation channel (TC 1.A.1.5) family. Homomultimer. Interacts with CPK32. Expressed in pollen grains. Not detected in leaves, roots or root hairs.

The protein localises to the cell membrane. It is found in the cytoplasmic vesicle membrane. Functionally, cyclic nucleotide-gated ion channel required for directional pollen tube growth into the transmitting tract. Acts as a Ca(2+)-permeable divalent cation-selective channel inhibited by either lanthanum or gadolinium. Regulated by CPK32 to mediate Ca(2+) transport across the plasma membrane in response to Ca(2+) oscillation. This is Cyclic nucleotide-gated ion channel 18 from Arabidopsis thaliana (Mouse-ear cress).